Reading from the N-terminus, the 400-residue chain is Nicotinate phosphoribosyltransferase (400 aa).

A Phosphohistidine; by autocatalysis modification is found at His-220.

Belongs to the NAPRTase family. Post-translationally, transiently phosphorylated on a His residue during the reaction cycle. Phosphorylation strongly increases the affinity for substrates and increases the rate of nicotinate D-ribonucleotide production. Dephosphorylation regenerates the low-affinity form of the enzyme, leading to product release.

It carries out the reaction nicotinate + 5-phospho-alpha-D-ribose 1-diphosphate + ATP + H2O = nicotinate beta-D-ribonucleotide + ADP + phosphate + diphosphate. Its pathway is cofactor biosynthesis; NAD(+) biosynthesis; nicotinate D-ribonucleotide from nicotinate: step 1/1. Functionally, catalyzes the synthesis of beta-nicotinate D-ribonucleotide from nicotinate and 5-phospho-D-ribose 1-phosphate at the expense of ATP. The chain is Nicotinate phosphoribosyltransferase from Salmonella agona (strain SL483).